The following is a 122-amino-acid chain: Large ribosomal subunit protein uL18 (122 aa).

Residues 1–19 (MSKLSRKQQTQKRHKRLRR) are compositionally biased toward basic residues. Residues 1 to 27 (MSKLSRKQQTQKRHKRLRRNLSGTESR) are disordered.

It belongs to the universal ribosomal protein uL18 family. Part of the 50S ribosomal subunit; part of the 5S rRNA/L5/L18/L25 subcomplex. Contacts the 5S and 23S rRNAs.

Functionally, this is one of the proteins that bind and probably mediate the attachment of the 5S RNA into the large ribosomal subunit, where it forms part of the central protuberance. The chain is Large ribosomal subunit protein uL18 from Prochlorococcus marinus (strain NATL1A).